A 949-amino-acid polypeptide reads, in one-letter code: UvrABC system protein A (949 aa).

42–49 contacts ATP; the sequence is GLSGSGKS. Residues 262–289 form a C4-type zinc finger; that stretch reads CPVCSYSLPELEPRLFSFNNPMGSCPTC. ABC transporter domains follow at residues 319–596 and 616–945; these read WDKR…ENSV and VNPD…KYLK. 649 to 656 provides a ligand contact to ATP; it reads GVSGSGKS. A C4-type zinc finger spans residues 748 to 774; the sequence is CEACQGDGVIKVEMHFLPDVYVPCEVC.

Belongs to the ABC transporter superfamily. UvrA family. As to quaternary structure, forms a heterotetramer with UvrB during the search for lesions.

The protein localises to the cytoplasm. Functionally, the UvrABC repair system catalyzes the recognition and processing of DNA lesions. UvrA is an ATPase and a DNA-binding protein. A damage recognition complex composed of 2 UvrA and 2 UvrB subunits scans DNA for abnormalities. When the presence of a lesion has been verified by UvrB, the UvrA molecules dissociate. The chain is UvrABC system protein A from Neisseria meningitidis serogroup B (strain ATCC BAA-335 / MC58).